We begin with the raw amino-acid sequence, 444 residues long: UDP-N-acetylmuramate--L-alanine ligase (444 aa).

110 to 116 (GAHGKTS) provides a ligand contact to ATP.

The protein belongs to the MurCDEF family.

It is found in the cytoplasm. The enzyme catalyses UDP-N-acetyl-alpha-D-muramate + L-alanine + ATP = UDP-N-acetyl-alpha-D-muramoyl-L-alanine + ADP + phosphate + H(+). It functions in the pathway cell wall biogenesis; peptidoglycan biosynthesis. Its function is as follows. Cell wall formation. In Streptococcus pneumoniae (strain Hungary19A-6), this protein is UDP-N-acetylmuramate--L-alanine ligase.